A 256-amino-acid chain; its full sequence is HTH-type transcriptional regulator PrtR (256 aa).

Residues 16 to 69 enclose the HTH cro/C1-type domain; sequence LKQAMAMRNLKQETLAEAAGVSQNTIHKLTSGKAQSTRKLIEIAAALGVSPVWL. The H-T-H motif DNA-binding region spans 27-46; sequence QETLAEAAGVSQNTIHKLTS.

Represses the promoter activity of the prtN gene. In Pseudomonas aeruginosa (strain ATCC 15692 / DSM 22644 / CIP 104116 / JCM 14847 / LMG 12228 / 1C / PRS 101 / PAO1), this protein is HTH-type transcriptional regulator PrtR (prtR).